Consider the following 387-residue polypeptide: F-box protein At5g41490 (387 aa).

Positions 2–47 (ATMITNLRRDLIEEIISRVPLRSMKAVRLTCKSWNNISKSEIFTKM) constitute an F-box domain.

This chain is F-box protein At5g41490, found in Arabidopsis thaliana (Mouse-ear cress).